Here is a 74-residue protein sequence, read N- to C-terminus: Conotoxin TsMLCL-04 (74 aa).

The first 19 residues, 1 to 19, serve as a signal peptide directing secretion; it reads MLCLPVFIILLLLASPAAP. Positions 20–60 are excised as a propeptide; that stretch reads NPLETRIQRDLIRAALEDADMKTNERFLEGVISTIKDFAGK.

It belongs to the conotoxin T superfamily. In terms of processing, contains 2 disulfide bonds that can be either 'C1-C3, C2-C4' or 'C1-C4, C2-C3', since these disulfide connectivities have been observed for conotoxins with cysteine framework V (for examples, see AC P0DQQ7 and AC P81755). As to expression, expressed by the venom duct.

Its subcellular location is the secreted. The polypeptide is Conotoxin TsMLCL-04 (Conus tessulatus (Tessellate cone)).